Consider the following 156-residue polypeptide: Small ribosomal subunit protein uS7 (156 aa).

Belongs to the universal ribosomal protein uS7 family. As to quaternary structure, part of the 30S ribosomal subunit. Contacts proteins S9 and S11.

Functionally, one of the primary rRNA binding proteins, it binds directly to 16S rRNA where it nucleates assembly of the head domain of the 30S subunit. Is located at the subunit interface close to the decoding center, probably blocks exit of the E-site tRNA. This is Small ribosomal subunit protein uS7 from Syntrophus aciditrophicus (strain SB).